We begin with the raw amino-acid sequence, 87 residues long: Large ribosomal subunit protein bL27c (87 aa).

Positions 1–20 (MAHKKGSGSTKNGRDSRSQR) are disordered.

It belongs to the bacterial ribosomal protein bL27 family.

The protein resides in the plastid. It is found in the chloroplast. This is Large ribosomal subunit protein bL27c from Gracilaria tenuistipitata var. liui (Red alga).